The sequence spans 64 residues: EWCGSNADCGDGQCCTGGSFNRHCQSLADDGTPCQKPNDYNEYKFGCPCKEGLICSPINYCQKK.

Intrachain disulfides connect Cys-3/Cys-15, Cys-9/Cys-24, Cys-14/Cys-47, Cys-34/Cys-55, and Cys-49/Cys-61.

Expressed by the venom gland.

It localises to the secreted. Functionally, non-toxic to mice and insects. This is U9-ctenitoxin-Pr1a from Phoneutria reidyi (Brazilian Amazonian armed spider).